The following is a 457-amino-acid chain: Fibrinogen C domain-containing protein 1-A (457 aa).

The disordered stretch occupies residues methionine 1–glutamine 20. The Cytoplasmic segment spans residues methionine 1–cysteine 33. A helical; Signal-anchor for type II membrane protein transmembrane segment spans residues threonine 34–methionine 54. The Extracellular portion of the chain corresponds to asparagine 55–asparagine 457. Positions alanine 216–serine 235 are disordered. The region spanning cysteine 231 to arginine 454 is the Fibrinogen C-terminal domain. A glycan (N-linked (GlcNAc...) asparagine) is linked at asparagine 233. A disulfide bridge connects residues cysteine 240 and cysteine 269. N-linked (GlcNAc...) asparagine glycosylation is present at asparagine 336. Aspartate 389 and aspartate 391 together coordinate Ca(2+). An intrachain disulfide couples cysteine 397 to cysteine 410.

Homotetramer; disulfide-linked.

The protein resides in the membrane. Functionally, acetyl group-binding receptor which shows a calcium-dependent binding to acetylated structures such as chitin, some N-acetylated carbohydrates, and amino acids. In Xenopus laevis (African clawed frog), this protein is Fibrinogen C domain-containing protein 1-A (fibcd1-a).